Consider the following 168-residue polypeptide: MINKRSLLASFINLPYSLFITFKGMYITLRYMFKPKVTLNYPLEKNPLSTRFRGEHALRTYKNGEERCIACKLCEAICPAQAITIEAQERDTDNSRRTVRYDIDMTKCIYCGFCQEACPVDAIVEGPNFEYATETREELMYNKSKLLHNGQIWEEAIDLRIKKNSKFY.

4Fe-4S ferredoxin-type domains are found at residues 58-88 (LRTY…IEAQ) and 99-128 (VRYD…EGPN). Cys-68, Cys-71, Cys-74, Cys-78, Cys-108, Cys-111, Cys-114, and Cys-118 together coordinate [4Fe-4S] cluster.

This sequence belongs to the complex I 23 kDa subunit family. As to quaternary structure, NDH-1 is composed of 14 different subunits. Subunits NuoA, H, J, K, L, M, N constitute the membrane sector of the complex. [4Fe-4S] cluster is required as a cofactor.

Its subcellular location is the cell inner membrane. It catalyses the reaction a quinone + NADH + 5 H(+)(in) = a quinol + NAD(+) + 4 H(+)(out). Its function is as follows. NDH-1 shuttles electrons from NADH, via FMN and iron-sulfur (Fe-S) centers, to quinones in the respiratory chain. The immediate electron acceptor for the enzyme in this species is believed to be ubiquinone. Couples the redox reaction to proton translocation (for every two electrons transferred, four hydrogen ions are translocated across the cytoplasmic membrane), and thus conserves the redox energy in a proton gradient. The polypeptide is NADH-quinone oxidoreductase subunit I (Ehrlichia ruminantium (strain Gardel)).